The sequence spans 77 residues: Vacuolar ATPase assembly integral membrane protein VMA21 (77 aa).

The Cytoplasmic segment spans residues 1–8 (MAVDVPTS). The helical transmembrane segment at 9–29 (VIVKLMFFTLAMVSFPVLTFF) threads the bilayer. Residues 30–41 (VSQQYTSNTLVN) lie on the Lumenal side of the membrane. Residues 42-62 (GGLAALAANVVLFAYVIMAFS) traverse the membrane as a helical segment. The Cytoplasmic portion of the chain corresponds to 63 to 77 (EDVPQSDGKESKKQQ). The Prevents secretion from ER signature appears at 74–77 (KKQQ).

Belongs to the VMA21 family.

The protein localises to the endoplasmic reticulum membrane. The protein resides in the endoplasmic reticulum-Golgi intermediate compartment membrane. Its subcellular location is the cytoplasmic vesicle. It is found in the COPII-coated vesicle membrane. Functionally, required for the assembly of the V0 complex of the vacuolar ATPase (V-ATPase) in the endoplasmic reticulum. The chain is Vacuolar ATPase assembly integral membrane protein VMA21 from Eremothecium gossypii (strain ATCC 10895 / CBS 109.51 / FGSC 9923 / NRRL Y-1056) (Yeast).